The chain runs to 504 residues: Maturase K (504 aa).

The protein belongs to the intron maturase 2 family. MatK subfamily.

It is found in the plastid. Its subcellular location is the chloroplast. Its function is as follows. Usually encoded in the trnK tRNA gene intron. Probably assists in splicing its own and other chloroplast group II introns. The polypeptide is Maturase K (Cucumis sativus (Cucumber)).